The sequence spans 528 residues: Protein DA1-related 2 (528 aa).

Residues 60 to 108 (SNGGGSGAHTNHHPPQFQEDENMVFPLPPSSLDDRSRGARDKEELDRSI) are disordered. Residues 91–106 (LDDRSRGARDKEELDR) show a composition bias toward basic and acidic residues. Residues 99 to 118 (RDKEELDRSISLSLADNTKR) form the UIM 1 domain. Residues 127–148 (DNNRDFPRPFHGGLNPSSFIPP) enclose the UIM 2; degenerate domain. The LIM zinc-binding domain occupies 160–220 (RICGGCNSDI…KLCFKELTHP (61 aa)). Residues 447 to 474 (DPSTRNLPSTSSVATSSSSSFSNKKGGK) are disordered. The segment covering 455-470 (STSSVATSSSSSFSNK) has biased composition (low complexity).

Interacts with ubiquitin, TCP14 and TCP15. Polyubiquitinated by DA2. Expressed in the vasculature of leaves, inflorescence stems, flowers, hypocotyls, and primary and lateral roots. In roots, expressed in phloem companion cells.

Acts redundantly with DA1 and DAR1 to regulate endoreduplication during leaf development. Together with DA1 and DAR1, modulates the protein stability of the transcription factors TCP14 and TCP15, which repress endoreduplication by directly regulating the expression of cell-cycle genes. Involved in root phloem development. Is an essential component of early phloem development, long-distance delivery of phloem content, and proper maintenance of root system architecture. Involved in the control of root meristem size. Functions genetically downstream of cytokinin and IAA3 to maintain normal auxin distribution by influencing polar auxin transport. Acts through the PLETHORA pathway, upstream of PLT1 and PLT2 to influence root stem cell niche activity and thus control root meristem size. The chain is Protein DA1-related 2 from Arabidopsis thaliana (Mouse-ear cress).